Consider the following 369-residue polypeptide: MALTLEALVKRFGGEIVGDAQCTVSGLAPLDQAGPQQLAFLANPKYLSQVETSGAGAVLIAPKDLEKLGAAEGSLTSGPRTAGPSNFIVTANPYAYFARVAQMFIDLATPPRAAGVHPSATIDPSAQVAASAVIGPHVTIEAGAVIADDVQLDAGVFVGRGTTIGAGSHLYPNAAVYHGCKIGPRAIIHAGAVIGSDGFGFAPDFVGDGDARTGSWVKIPQVGGVSIGPDVEIGANTTIDRGAMADTVIEACVKIDNQVQIGHNCRIGAYTVIAGSAGIAGSTTIGRHCMIGGAAGIAGHVTLGDYVIITAKSGVSKSLPKAGIYTSAFPAVDHGEWNRSAALVRNLDKLRDRIKALETALAAQGGTDA.

The active-site Proton acceptor is His-263.

This sequence belongs to the transferase hexapeptide repeat family. LpxD subfamily. As to quaternary structure, homotrimer.

The catalysed reaction is a UDP-3-O-[(3R)-3-hydroxyacyl]-alpha-D-glucosamine + a (3R)-hydroxyacyl-[ACP] = a UDP-2-N,3-O-bis[(3R)-3-hydroxyacyl]-alpha-D-glucosamine + holo-[ACP] + H(+). It functions in the pathway bacterial outer membrane biogenesis; LPS lipid A biosynthesis. Functionally, catalyzes the N-acylation of UDP-3-O-acylglucosamine using 3-hydroxyacyl-ACP as the acyl donor. Is involved in the biosynthesis of lipid A, a phosphorylated glycolipid that anchors the lipopolysaccharide to the outer membrane of the cell. The polypeptide is UDP-3-O-acylglucosamine N-acyltransferase (Burkholderia vietnamiensis (strain G4 / LMG 22486) (Burkholderia cepacia (strain R1808))).